The primary structure comprises 343 residues: Methionine import ATP-binding protein MetN (343 aa).

One can recognise an ABC transporter domain in the interval 2 to 241 (IKLSNITKVF…PKTPLAQKFI (240 aa)). Residue 38–45 (GASGAGKS) coordinates ATP.

Belongs to the ABC transporter superfamily. Methionine importer (TC 3.A.1.24) family. As to quaternary structure, the complex is composed of two ATP-binding proteins (MetN), two transmembrane proteins (MetI) and a solute-binding protein (MetQ).

It localises to the cell inner membrane. The catalysed reaction is L-methionine(out) + ATP + H2O = L-methionine(in) + ADP + phosphate + H(+). It carries out the reaction D-methionine(out) + ATP + H2O = D-methionine(in) + ADP + phosphate + H(+). Its function is as follows. Part of the ABC transporter complex MetNIQ involved in methionine import. Responsible for energy coupling to the transport system. The polypeptide is Methionine import ATP-binding protein MetN (Shigella flexneri serotype 5b (strain 8401)).